Reading from the N-terminus, the 373-residue chain is Mating-type protein A-2 (373 aa).

Residues 1-22 (MNLLNMQPKRSEQPAMFEENRA) are disordered.

To P.anserina SMR1.

Its function is as follows. Required, together with mating-type protein A-3, for efficient ascospore formation. The sequence is that of Mating-type protein A-2 (matA-2) from Neurospora crassa (strain ATCC 24698 / 74-OR23-1A / CBS 708.71 / DSM 1257 / FGSC 987).